The chain runs to 207 residues: Cytochrome c biogenesis ATP-binding export protein CcmA (207 aa).

An ABC transporter domain is found at 2–204; that stretch reads LEVKNLTAIR…NPKLRKIRLG (203 aa). 34-41 lines the ATP pocket; it reads GRNGTGKT.

Belongs to the ABC transporter superfamily. CcmA exporter (TC 3.A.1.107) family. The complex is composed of two ATP-binding proteins (CcmA) and two transmembrane proteins (CcmB).

It is found in the cell inner membrane. It catalyses the reaction heme b(in) + ATP + H2O = heme b(out) + ADP + phosphate + H(+). Part of the ABC transporter complex CcmAB involved in the biogenesis of c-type cytochromes; once thought to export heme, this seems not to be the case, but its exact role is uncertain. Responsible for energy coupling to the transport system. The protein is Cytochrome c biogenesis ATP-binding export protein CcmA of Vibrio cholerae serotype O1 (strain ATCC 39315 / El Tor Inaba N16961).